We begin with the raw amino-acid sequence, 463 residues long: MHRLVASVIDTVVNLAKRRGFVYPSGEIYGGTRSAWDYGPLGVEFKENIKRQWWRSVVTGREDVVGLDSSIILPRQVWVASGHVEVFHDPLVESLITHKRYRADHLIEAYEAKHGHPPPNGLADIRDPDTGEPGRWTEPREFNMMLKTYLGPIETEEGLHYLRPETAQGIFVNFANVVTTARKKPPFGIGQIGKSFRNEITPGNFIFRTREFEQMEMEFFVEPSTAKEWHQYWIDTRLQWYVELGIDPQNLRLFEHPADKLSHYSDRTVDIEYKFGFAGNPWGELEGVANRTDFDLSTHSKHSGVDLSFYDQATDSRYIPYVIEPAAGLTRSFMAFLIDAYVEDEAPNAKGKMEKRAVLRLDPRLAPVKAAVLPLSRHADLSPKARDLAAELRRFWNIEFDDAGAIGRRYRRQDEIGTPFCVTVDFDSLEDNAVTVRRRDDMSQERIGMDAVADYLSARLKGC.

Position 102 (Arg-102) interacts with substrate. The tract at residues 113–134 (KHGHPPPNGLADIRDPDTGEPG) is disordered. Glu-165 contributes to the substrate binding site. ATP contacts are provided by residues 197 to 199 (RNE), 207 to 212 (FRTREF), 284 to 285 (EL), and 328 to 331 (GLTR). 212–216 (FEQME) contributes to the substrate binding site. 324 to 328 (EPAAG) is a substrate binding site.

The protein belongs to the class-II aminoacyl-tRNA synthetase family. As to quaternary structure, homodimer.

Its subcellular location is the cytoplasm. The catalysed reaction is tRNA(Gly) + glycine + ATP = glycyl-tRNA(Gly) + AMP + diphosphate. Catalyzes the attachment of glycine to tRNA(Gly). This chain is Glycine--tRNA ligase, found in Mycolicibacterium paratuberculosis (strain ATCC BAA-968 / K-10) (Mycobacterium paratuberculosis).